The following is a 59-amino-acid chain: Cecropin-A (59 aa).

Residues 1–23 (MNFNKLFVIVLLAALAFFGQAEA) form the signal peptide. A Leucine amide modification is found at Leu57.

Belongs to the cecropin family.

The protein resides in the secreted. In terms of biological role, cecropins have lytic and antibacterial activity against several Gram-positive and Gram-negative bacteria. The sequence is that of Cecropin-A (CECA) from Culex pipiens pipiens (Northern house mosquito).